A 121-amino-acid chain; its full sequence is uncharacterized protein (121 aa).

The protein to M.jannaschii MJ0989.

This is an uncharacterized protein from Methanopyrus kandleri (strain AV19 / DSM 6324 / JCM 9639 / NBRC 100938).